The following is a 474-amino-acid chain: Adenosylhomocysteinase (474 aa).

Substrate-binding residues include Thr-61, Asp-136, and Glu-196. Position 197-199 (197-199 (TTT)) interacts with NAD(+). Residues Lys-226 and Asp-230 each contribute to the substrate site. NAD(+)-binding positions include Asn-231, 260–265 (GYGDVG), Glu-283, Asn-318, 339–341 (IGH), and Asn-384.

The protein belongs to the adenosylhomocysteinase family. NAD(+) is required as a cofactor.

It localises to the cytoplasm. It catalyses the reaction S-adenosyl-L-homocysteine + H2O = L-homocysteine + adenosine. The protein operates within amino-acid biosynthesis; L-homocysteine biosynthesis; L-homocysteine from S-adenosyl-L-homocysteine: step 1/1. Its function is as follows. May play a key role in the regulation of the intracellular concentration of adenosylhomocysteine. The chain is Adenosylhomocysteinase from Ralstonia nicotianae (strain ATCC BAA-1114 / GMI1000) (Ralstonia solanacearum).